Here is a 310-residue protein sequence, read N- to C-terminus: MEKVLVFGHKNPDTDAICSAIAYAELKKELGMNAEPVRLGEISGETQFALDYFKVEGPRFVETVANEVDNVILVDHNERQQSANDIESVRVLEVIDHHRIANFETSDPLYYRCEPVGCTATILNKMYKENGVAIRKEIAGLMLSAIISDSLLFKSPTCTEQDVAAARELAEIAGVDAESYGLEMLKAGADLSGKTMEQLISLDAKEFQMGNAKVEIAQVNAVDTNDVLVHQAELEKVISAVVEEKGLDLFLFVVTDILTNDSVGLAIGKAANAVEKAYNVTLENNTATLKGVVSRKKQIVPVLTETFQAL.

Residues His9, Asp13, Asp15, Asp75, His97, and Asp149 each coordinate Mn(2+).

The protein belongs to the PPase class C family. The cofactor is Mn(2+).

It localises to the cytoplasm. It carries out the reaction diphosphate + H2O = 2 phosphate + H(+). The polypeptide is Probable manganese-dependent inorganic pyrophosphatase (Bacillus cytotoxicus (strain DSM 22905 / CIP 110041 / 391-98 / NVH 391-98)).